Here is a 67-residue protein sequence, read N- to C-terminus: UPF0434 protein Tcr_0959 (67 aa).

This sequence belongs to the UPF0434 family.

This is UPF0434 protein Tcr_0959 from Hydrogenovibrio crunogenus (strain DSM 25203 / XCL-2) (Thiomicrospira crunogena).